Consider the following 293-residue polypeptide: CDP-abequose synthase (293 aa).

T113 contacts substrate. The active-site Proton acceptor is the Y130.

The protein belongs to the NAD(P)-dependent epimerase/dehydratase family.

It catalyses the reaction CDP-alpha-D-abequose + NADP(+) = CDP-4-dehydro-3,6-dideoxy-alpha-D-glucose + NADPH + H(+). Its pathway is bacterial outer membrane biogenesis; LPS O-antigen biosynthesis. The protein is CDP-abequose synthase of Salmonella muenchen.